The sequence spans 531 residues: 4-hydroxyphenylacetaldehyde oxime monooxygenase (531 aa).

Residues 18–38 form a helical membrane-spanning segment; sequence WQTCLLVLLPVLLVSYYLLTS. Arg122, Arg151, Arg466, and Cys468 together coordinate heme b.

Belongs to the cytochrome P450 family. Heme b is required as a cofactor.

It is found in the endoplasmic reticulum membrane. The catalysed reaction is (E)-4-hydroxyphenylacetaldehyde oxime + reduced [NADPH--hemoprotein reductase] + O2 = (S)-4-hydroxymandelonitrile + oxidized [NADPH--hemoprotein reductase] + 2 H2O + H(+). The enzyme catalyses (E)-4-hydroxyphenylacetaldehyde oxime = (Z)-(4-hydroxyphenyl)acetaldehyde oxime. It catalyses the reaction (Z)-(4-hydroxyphenyl)acetaldehyde oxime = 4-hydroxyphenylacetonitrile + H2O. It carries out the reaction 4-hydroxyphenylacetonitrile + reduced [NADPH--hemoprotein reductase] + O2 = (S)-4-hydroxymandelonitrile + oxidized [NADPH--hemoprotein reductase] + H2O + H(+). Its pathway is secondary metabolite biosynthesis; dhurrin biosynthesis; dhurrin from L-tyrosine: step 2/3. Cytochrome P450 involved in the biosynthesis of the cyanogenic glucoside dhurrin. Catalyzes the conversion of p-hydroxyphenylacetaldoxime to p-hydroxymandelonitrile via three different and successive activities: isomerization of the (E) isomer to the (Z) isomer of p-hydroxyphenylacetaldoxime, followed by dehydration of the oxime to the corresponding nitrile, and C-hydroxylation of the nitrile to produce p-hydroxymandelonitrile. In Sorghum bicolor (Sorghum), this protein is 4-hydroxyphenylacetaldehyde oxime monooxygenase.